A 319-amino-acid chain; its full sequence is Taste receptor type 2 member 30 (319 aa).

Residue Met1 is a topological domain, extracellular. The helical transmembrane segment at 2 to 22 (ITFLPIIFSILIVVIFVVGNF) threads the bilayer. Residues 23–46 (ANGFIALVNSIEWVKRQKISFVDQ) lie on the Cytoplasmic side of the membrane. Residues 47-67 (ILTALAVSRVGLLWVLLLHWY) traverse the membrane as a helical segment. At 68-86 (ATQLNPAFYSVEVRITVYN) the chain is on the extracellular side. A helical membrane pass occupies residues 87–107 (VWAVTNHFSSWLATSLSMFYL). Topologically, residues 108 to 126 (LKIANFSNLIFLRIKRRVK) are cytoplasmic. Residues 127-147 (SVVLVILLGPLLFLVCHLFVI) traverse the membrane as a helical segment. Residues 148–178 (NMDETIWTKEYEGNMTWKIKLKSAMYHSNMT) lie on the Extracellular side of the membrane. N-linked (GlcNAc...) asparagine glycosylation is found at Asn161 and Asn176. Residues 179-199 (LTILANFVPLTLTLISFLLLI) form a helical membrane-spanning segment. Over 200 to 229 (CSLCKHLKKMQLHGKGSQDPSTKVHIKALQ) the chain is Cytoplasmic. The helical transmembrane segment at 230-250 (TVTSFLLLCAIYFLSMIISVC) threads the bilayer. The Extracellular segment spans residues 251-259 (NLGRLQKQP). Residues 260 to 280 (VFMFCQAIIFSYPSTHPFILI) form a helical membrane-spanning segment. The Cytoplasmic portion of the chain corresponds to 281-319 (LGNKKLKQIFLSVLWHVRYWVKDRSLRLHRFTRAALCKG).

The protein belongs to the G-protein coupled receptor T2R family.

It localises to the membrane. Its function is as follows. Receptor that may play a role in the perception of bitterness and is gustducin-linked. May play a role in sensing the chemical composition of the gastrointestinal content. The activity of this receptor may stimulate alpha gustducin, mediate PLC-beta-2 activation and lead to the gating of TRPM5. This is Taste receptor type 2 member 30 (TAS2R30) from Pan paniscus (Pygmy chimpanzee).